We begin with the raw amino-acid sequence, 461 residues long: L-serine dehydratase (461 aa).

This sequence belongs to the iron-sulfur dependent L-serine dehydratase family. [4Fe-4S] cluster is required as a cofactor.

The catalysed reaction is L-serine = pyruvate + NH4(+). Its pathway is carbohydrate biosynthesis; gluconeogenesis. The chain is L-serine dehydratase (sdaA) from Mycobacterium bovis (strain ATCC BAA-935 / AF2122/97).